The chain runs to 311 residues: Regulator of rDNA transcription protein 6 (311 aa).

2 consecutive transmembrane segments (helical) span residues 32–52 (PHLL…SAEL) and 271–291 (YLIV…IIVT).

It is found in the membrane. Its function is as follows. May be involved in the modulation of rDNA transcription. The chain is Regulator of rDNA transcription protein 6 (RRT6) from Saccharomyces cerevisiae (strain ATCC 204508 / S288c) (Baker's yeast).